The sequence spans 1324 residues: Myotubularin-related protein DDB_G0290005 (1324 aa).

Residues 140-276 are disordered; sequence KYHDNTTPNN…TSSTNGNCST (137 aa). A compositionally biased stretch (low complexity) spans 144–180; that stretch reads NTTPNNNNNNNNNNNNNNNNTNNNNNNNINKSNNSST. The segment covering 181–194 has biased composition (polar residues); the sequence is DQLNSFSLEKQPSQ. The segment covering 195 to 222 has biased composition (low complexity); sequence NENLNNNNNNNNNNNNGNNNINNNNLMN. Over residues 223–247 the composition is skewed to polar residues; the sequence is SLTQPSTSSRSRLLKSNSTPINLNE. Positions 248-276 are enriched in low complexity; sequence SSTSTNSPTLSSTTTTTTTTSSTNGNCST. Residues 349–807 form the Myotubularin phosphatase domain; sequence GWLFYDPIEE…KGVQLWSDYF (459 aa). Substrate is bound by residues 514–515, 575–581, and Arg-621; these read NI and CIDGWDR. The active-site Phosphocysteine intermediate is the Cys-575. 5 disordered regions span residues 624–664, 841–1043, 1066–1110, 1144–1213, and 1232–1296; these read QSIS…TTTS, QKKK…QQQE, EQQE…QQQT, RKQE…LTMP, and LHPN…DNTS. Composition is skewed to low complexity over residues 625–664 and 852–864; these read SISS…TTTS and GASG…SGSS. Positions 865–882 are enriched in basic residues; the sequence is SKHHHHHHHHHHHHHHRK. Over residues 883–894 the composition is skewed to basic and acidic residues; it reads STDEKDSKEKSS. Low complexity-rich tracts occupy residues 899-914 and 927-973; these read SRTS…STSS and TITT…TTTP. Residues 988–1002 show a composition bias toward basic and acidic residues; sequence DKLKSPSGDDIKQEQ. The segment covering 1005–1024 has biased composition (polar residues); it reads MNQFTSQHPNNQMESSSEIN. Residues 1020 to 1195 adopt a coiled-coil conformation; that stretch reads SSEINQQNEQ…LEQQKPKADI (176 aa). Over residues 1025–1043 the composition is skewed to low complexity; the sequence is QQNEQSQLEQQQEQQQQQE. A compositionally biased stretch (polar residues) spans 1079-1090; sequence PNETITYSMESD. A compositionally biased stretch (low complexity) spans 1091–1109; the sequence is SQSSISQNQNQLQQQQQQQ. Basic and acidic residues predominate over residues 1144–1193; the sequence is RKQEKEKRKLEKEKKQKERAERKLEKEKKRDQKEREQKEKELLEQQKPKA. Over residues 1234–1243 the composition is skewed to polar residues; the sequence is PNLSDQNSQT. Composition is skewed to low complexity over residues 1244–1258 and 1265–1294; these read NSSG…NSPN and SNLS…NNDN.

It belongs to the protein-tyrosine phosphatase family. Non-receptor class myotubularin subfamily.

The protein resides in the cytoplasm. Functionally, phosphatase that acts on lipids with a phosphoinositol headgroup. In Dictyostelium discoideum (Social amoeba), this protein is Myotubularin-related protein DDB_G0290005.